Reading from the N-terminus, the 461-residue chain is Cysteine--tRNA ligase (461 aa).

Zn(2+) is bound at residue C28. Positions 30 to 40 match the 'HIGH' region motif; sequence ITVYDLCHIGH. 3 residues coordinate Zn(2+): C209, H234, and E238. Positions 266 to 270 match the 'KMSKS' region motif; sequence KMSKS. K269 lines the ATP pocket.

This sequence belongs to the class-I aminoacyl-tRNA synthetase family. As to quaternary structure, monomer. The cofactor is Zn(2+).

Its subcellular location is the cytoplasm. The enzyme catalyses tRNA(Cys) + L-cysteine + ATP = L-cysteinyl-tRNA(Cys) + AMP + diphosphate. This is Cysteine--tRNA ligase from Escherichia coli (strain 55989 / EAEC).